The primary structure comprises 194 residues: MRLTDLEIAACLEEGSIVIDPRPDAEAISGVSVDVKLGNQFRVFQDHTAPYIDLSGPSSEVQEALDRVMSDKIVIPEGEAFFLHPGELALAVTHESLTLPADIVGWLDGRSSLARLGLMVHVTAHRIDPGWQGKIVLEFFNSGKLPLALKPMMTIGALNFERLSSPVARPYNKRKSAKYRDQQEAVASRISQDK.

Residues 110–115 (RSSLAR), Asp-128, 136–138 (VLE), Tyr-171, Lys-178, and Gln-182 contribute to the dCTP site. Glu-138 serves as the catalytic Proton donor/acceptor. The segment at 172–194 (NKRKSAKYRDQQEAVASRISQDK) is disordered.

The protein belongs to the dCTP deaminase family. In terms of assembly, homotrimer.

The catalysed reaction is dCTP + H2O + H(+) = dUTP + NH4(+). It participates in pyrimidine metabolism; dUMP biosynthesis; dUMP from dCTP (dUTP route): step 1/2. In terms of biological role, catalyzes the deamination of dCTP to dUTP. This chain is dCTP deaminase, found in Shewanella loihica (strain ATCC BAA-1088 / PV-4).